The following is a 488-amino-acid chain: Alkaline nuclease (488 aa).

It belongs to the herpesviridae alkaline nuclease family. In terms of assembly, interacts with major DNA-binding protein; this interaction increases the nuclease processivity of the alkaline exonuclease.

Its subcellular location is the host nucleus. It localises to the host cytoplasm. In terms of biological role, plays a role in processing non linear or branched viral DNA intermediates in order to promote the production of mature packaged unit-length linear progeny viral DNA molecules. Exhibits endonuclease and exonuclease activities and accepts both double-stranded and single-stranded DNA as substrate. Exonuclease digestion of DNA is in the 5'-&gt; 3' direction and the products are 5'-monophosphate nucleosides. Additionally, forms a recombinase with the major DNA-binding protein, which displays strand exchange activity. This chain is Alkaline nuclease (U70), found in Homo sapiens (Human).